The following is a 235-amino-acid chain: Pyridoxine 5'-phosphate synthase (235 aa).

Asn6 contributes to the 3-amino-2-oxopropyl phosphate binding site. 1-deoxy-D-xylulose 5-phosphate is bound at residue 8–9 (DH). Position 17 (Arg17) interacts with 3-amino-2-oxopropyl phosphate. His42 acts as the Proton acceptor in catalysis. Arg44 and His49 together coordinate 1-deoxy-D-xylulose 5-phosphate. Glu69 acts as the Proton acceptor in catalysis. Residue Thr99 coordinates 1-deoxy-D-xylulose 5-phosphate. His189 functions as the Proton donor in the catalytic mechanism. Residues Gly190 and 211–212 (GH) each bind 3-amino-2-oxopropyl phosphate.

The protein belongs to the PNP synthase family. In terms of assembly, homooctamer; tetramer of dimers.

It is found in the cytoplasm. The catalysed reaction is 3-amino-2-oxopropyl phosphate + 1-deoxy-D-xylulose 5-phosphate = pyridoxine 5'-phosphate + phosphate + 2 H2O + H(+). It functions in the pathway cofactor biosynthesis; pyridoxine 5'-phosphate biosynthesis; pyridoxine 5'-phosphate from D-erythrose 4-phosphate: step 5/5. Functionally, catalyzes the complicated ring closure reaction between the two acyclic compounds 1-deoxy-D-xylulose-5-phosphate (DXP) and 3-amino-2-oxopropyl phosphate (1-amino-acetone-3-phosphate or AAP) to form pyridoxine 5'-phosphate (PNP) and inorganic phosphate. The protein is Pyridoxine 5'-phosphate synthase of Chlorobium luteolum (strain DSM 273 / BCRC 81028 / 2530) (Pelodictyon luteolum).